We begin with the raw amino-acid sequence, 562 residues long: Dihydroxy-acid dehydratase (562 aa).

Aspartate 80 contributes to the Mg(2+) binding site. Cysteine 121 provides a ligand contact to [2Fe-2S] cluster. Residues aspartate 122 and lysine 123 each contribute to the Mg(2+) site. Lysine 123 is subject to N6-carboxylysine. Position 194 (cysteine 194) interacts with [2Fe-2S] cluster. Mg(2+) is bound at residue glutamate 446. Serine 472 acts as the Proton acceptor in catalysis.

This sequence belongs to the IlvD/Edd family. In terms of assembly, homodimer. It depends on [2Fe-2S] cluster as a cofactor. Mg(2+) is required as a cofactor.

The catalysed reaction is (2R)-2,3-dihydroxy-3-methylbutanoate = 3-methyl-2-oxobutanoate + H2O. The enzyme catalyses (2R,3R)-2,3-dihydroxy-3-methylpentanoate = (S)-3-methyl-2-oxopentanoate + H2O. It functions in the pathway amino-acid biosynthesis; L-isoleucine biosynthesis; L-isoleucine from 2-oxobutanoate: step 3/4. Its pathway is amino-acid biosynthesis; L-valine biosynthesis; L-valine from pyruvate: step 3/4. Functionally, functions in the biosynthesis of branched-chain amino acids. Catalyzes the dehydration of (2R,3R)-2,3-dihydroxy-3-methylpentanoate (2,3-dihydroxy-3-methylvalerate) into 2-oxo-3-methylpentanoate (2-oxo-3-methylvalerate) and of (2R)-2,3-dihydroxy-3-methylbutanoate (2,3-dihydroxyisovalerate) into 2-oxo-3-methylbutanoate (2-oxoisovalerate), the penultimate precursor to L-isoleucine and L-valine, respectively. In Staphylococcus aureus (strain MRSA252), this protein is Dihydroxy-acid dehydratase.